Reading from the N-terminus, the 570-residue chain is Formate--tetrahydrofolate ligase (570 aa).

65–72 (TPFGEGKT) is a binding site for ATP.

The protein belongs to the formate--tetrahydrofolate ligase family.

The catalysed reaction is (6S)-5,6,7,8-tetrahydrofolate + formate + ATP = (6R)-10-formyltetrahydrofolate + ADP + phosphate. Its pathway is one-carbon metabolism; tetrahydrofolate interconversion. The sequence is that of Formate--tetrahydrofolate ligase from Shewanella woodyi (strain ATCC 51908 / MS32).